Reading from the N-terminus, the 562-residue chain is Oxygen-dependent choline dehydrogenase (562 aa).

4–33 is an FAD binding site; it reads DYIIIGAGSAGNVLATRLTEDPNTTVLLLE. His-473 serves as the catalytic Proton acceptor.

It belongs to the GMC oxidoreductase family. FAD is required as a cofactor.

The catalysed reaction is choline + A = betaine aldehyde + AH2. It carries out the reaction betaine aldehyde + NAD(+) + H2O = glycine betaine + NADH + 2 H(+). Its pathway is amine and polyamine biosynthesis; betaine biosynthesis via choline pathway; betaine aldehyde from choline (cytochrome c reductase route): step 1/1. Functionally, involved in the biosynthesis of the osmoprotectant glycine betaine. Catalyzes the oxidation of choline to betaine aldehyde and betaine aldehyde to glycine betaine at the same rate. In Escherichia coli O45:K1 (strain S88 / ExPEC), this protein is Oxygen-dependent choline dehydrogenase.